The chain runs to 330 residues: Probable aldo-keto reductase 6 (330 aa).

Y64 (proton donor) is an active-site residue. H132 contacts substrate. Position 211-221 (211-221) interacts with NADP(+); that stretch reads SPLGRGFLGLP.

Belongs to the aldo/keto reductase family.

The sequence is that of Probable aldo-keto reductase 6 from Arabidopsis thaliana (Mouse-ear cress).